Consider the following 461-residue polypeptide: Chromosomal replication initiator protein DnaA (461 aa).

The segment at 1–87 is domain I, interacts with DnaA modulators; the sequence is MAVSLWQQCI…IGSRPSAKPV (87 aa). Positions 87 to 124 are domain II; that stretch reads VVQATAAIRPKPAASKAVEKPTFNAPQAEPAITANHRS. Residues 125–341 form a domain III, AAA+ region region; that stretch reads NINPTYQFDN…GALNRVIANA (217 aa). ATP-binding residues include glycine 169, glycine 171, lysine 172, and threonine 173. Residues 342 to 461 form a domain IV, binds dsDNA region; sequence NFTGRPITID…YANLIRTLSS (120 aa).

The protein belongs to the DnaA family. Oligomerizes as a right-handed, spiral filament on DNA at oriC.

The protein resides in the cytoplasm. Functionally, plays an essential role in the initiation and regulation of chromosomal replication. ATP-DnaA binds to the origin of replication (oriC) to initiate formation of the DNA replication initiation complex once per cell cycle. Binds the DnaA box (a 9 base pair repeat at the origin) and separates the double-stranded (ds)DNA. Forms a right-handed helical filament on oriC DNA; dsDNA binds to the exterior of the filament while single-stranded (ss)DNA is stabiized in the filament's interior. The ATP-DnaA-oriC complex binds and stabilizes one strand of the AT-rich DNA unwinding element (DUE), permitting loading of DNA polymerase. After initiation quickly degrades to an ADP-DnaA complex that is not apt for DNA replication. Binds acidic phospholipids. This chain is Chromosomal replication initiator protein DnaA, found in Shewanella piezotolerans (strain WP3 / JCM 13877).